A 376-amino-acid chain; its full sequence is Succinyl-diaminopimelate desuccinylase (376 aa).

His-67 is a binding site for Zn(2+). Residue Asp-69 is part of the active site. Asp-100 serves as a coordination point for Zn(2+). Catalysis depends on Glu-134, which acts as the Proton acceptor. 3 residues coordinate Zn(2+): Glu-135, Glu-163, and His-349.

This sequence belongs to the peptidase M20A family. DapE subfamily. In terms of assembly, homodimer. It depends on Zn(2+) as a cofactor. Co(2+) serves as cofactor.

It catalyses the reaction N-succinyl-(2S,6S)-2,6-diaminopimelate + H2O = (2S,6S)-2,6-diaminopimelate + succinate. It functions in the pathway amino-acid biosynthesis; L-lysine biosynthesis via DAP pathway; LL-2,6-diaminopimelate from (S)-tetrahydrodipicolinate (succinylase route): step 3/3. In terms of biological role, catalyzes the hydrolysis of N-succinyl-L,L-diaminopimelic acid (SDAP), forming succinate and LL-2,6-diaminopimelate (DAP), an intermediate involved in the bacterial biosynthesis of lysine and meso-diaminopimelic acid, an essential component of bacterial cell walls. The sequence is that of Succinyl-diaminopimelate desuccinylase from Haemophilus ducreyi (strain 35000HP / ATCC 700724).